Consider the following 406-residue polypeptide: 4-hydroxy-3-methylbut-2-en-1-yl diphosphate synthase (flavodoxin) (406 aa).

[4Fe-4S] cluster contacts are provided by cysteine 297, cysteine 300, cysteine 343, and glutamate 350.

Belongs to the IspG family. [4Fe-4S] cluster serves as cofactor.

It catalyses the reaction (2E)-4-hydroxy-3-methylbut-2-enyl diphosphate + oxidized [flavodoxin] + H2O + 2 H(+) = 2-C-methyl-D-erythritol 2,4-cyclic diphosphate + reduced [flavodoxin]. Its pathway is isoprenoid biosynthesis; isopentenyl diphosphate biosynthesis via DXP pathway; isopentenyl diphosphate from 1-deoxy-D-xylulose 5-phosphate: step 5/6. Its function is as follows. Converts 2C-methyl-D-erythritol 2,4-cyclodiphosphate (ME-2,4cPP) into 1-hydroxy-2-methyl-2-(E)-butenyl 4-diphosphate. In Thermus thermophilus (strain ATCC 27634 / DSM 579 / HB8), this protein is 4-hydroxy-3-methylbut-2-en-1-yl diphosphate synthase (flavodoxin).